A 341-amino-acid polypeptide reads, in one-letter code: Anthranilate phosphoribosyltransferase (341 aa).

Residues Gly84, 87 to 88 (GD), Thr92, 94 to 97 (NIST), 112 to 120 (KHGNRSVSS), and Ser124 contribute to the 5-phospho-alpha-D-ribose 1-diphosphate site. Gly84 provides a ligand contact to anthranilate. Residue Ser96 coordinates Mg(2+). Position 115 (Asn115) interacts with anthranilate. Arg170 contacts anthranilate. Residues Asp229 and Glu230 each contribute to the Mg(2+) site.

This sequence belongs to the anthranilate phosphoribosyltransferase family. Homodimer. Mg(2+) serves as cofactor.

It catalyses the reaction N-(5-phospho-beta-D-ribosyl)anthranilate + diphosphate = 5-phospho-alpha-D-ribose 1-diphosphate + anthranilate. It participates in amino-acid biosynthesis; L-tryptophan biosynthesis; L-tryptophan from chorismate: step 2/5. Catalyzes the transfer of the phosphoribosyl group of 5-phosphorylribose-1-pyrophosphate (PRPP) to anthranilate to yield N-(5'-phosphoribosyl)-anthranilate (PRA). The chain is Anthranilate phosphoribosyltransferase from Polynucleobacter necessarius subsp. necessarius (strain STIR1).